The following is a 622-amino-acid chain: UvrABC system protein C (622 aa).

Residues 13 to 92 form the GIY-YIG domain; it reads DKPGVYLMKN…IKKYRPRYNI (80 aa). Residues 204 to 239 form the UVR domain; it reads KDIIRKLKEDMDTLSENMEFEKAAELRDKIFALEKI.

This sequence belongs to the UvrC family. As to quaternary structure, interacts with UvrB in an incision complex.

It is found in the cytoplasm. In terms of biological role, the UvrABC repair system catalyzes the recognition and processing of DNA lesions. UvrC both incises the 5' and 3' sides of the lesion. The N-terminal half is responsible for the 3' incision and the C-terminal half is responsible for the 5' incision. This chain is UvrABC system protein C, found in Clostridium kluyveri (strain ATCC 8527 / DSM 555 / NBRC 12016 / NCIMB 10680 / K1).